A 599-amino-acid chain; its full sequence is ATP-binding cassette sub-family E member 1 (599 aa).

4Fe-4S ferredoxin-type domains are found at residues 7–37 and 46–75; these read RIAI…MGKL and KIAW…IVNL. Lys20 participates in a covalent cross-link: Glycyl lysine isopeptide (Lys-Gly) (interchain with G-Cter in ubiquitin). 2 consecutive ABC transporter domains span residues 79 to 315 and 342 to 562; these read LEKE…FLDG and VKKM…LSQL. Residues 110-117 and 379-386 each bind ATP; these read GTNGIGKS and GENGTGKT. Phosphoserine is present on Ser417. The residue at position 550 (Thr550) is a Phosphothreonine.

Belongs to the ABC transporter superfamily. ABCE family. (Microbial infection) Interacts with Chandipura virus matrix protein. In terms of assembly, interacts with PINK1. Interacts with CNOT4. Interacts with PELO. Probably heterodimerizes with RNASEL; this interaction inhibits RNASEL. As to quaternary structure, (Microbial infection) Interacts with HIV-1 proteins Vif and Gag. (Microbial infection) Interacts with HIV-2 protein Gag. Post-translationally, ubiquitinated by CNOT4. Ubiquitination mediates the recruitment of autophagy receptors to the mitochondrial outer membrane and initiates mitophagy.

Its subcellular location is the cytoplasm. The protein resides in the mitochondrion. The enzyme catalyses GTP + H2O = GDP + phosphate + H(+). It catalyses the reaction ATP + H2O = ADP + phosphate + H(+). It carries out the reaction CTP + H2O = CDP + phosphate + H(+). The catalysed reaction is UTP + H2O = UDP + phosphate + H(+). Functionally, nucleoside-triphosphatase (NTPase) involved in ribosome recycling by mediating ribosome disassembly. Able to hydrolyze ATP, GTP, UTP and CTP. Splits ribosomes into free 60S subunits and tRNA- and mRNA-bound 40S subunits. Acts either after canonical termination facilitated by release factors (ETF1/eRF1) or after recognition of stalled and vacant ribosomes by mRNA surveillance factors (PELO/Pelota). Involved in the No-Go Decay (NGD) pathway: recruited to stalled ribosomes by the Pelota-HBS1L complex, and drives the disassembly of stalled ribosomes, followed by degradation of damaged mRNAs as part of the NGD pathway. Also plays a role in quality control of translation of mitochondrial outer membrane-localized mRNA. As part of the PINK1-regulated signaling, ubiquitinated by CNOT4 upon mitochondria damage; this modification generates polyubiquitin signals that recruit autophagy receptors to the mitochondrial outer membrane and initiate mitophagy. RNASEL-specific protein inhibitor which antagonizes the binding of 2-5A (5'-phosphorylated 2',5'-linked oligoadenylates) to RNASEL. Negative regulator of the anti-viral effect of the interferon-regulated 2-5A/RNASEL pathway. In terms of biological role, (Microbial infection) May act as a chaperone for post-translational events during HIV-1 capsid assembly. (Microbial infection) Plays a role in the down-regulation of the 2-5A/RNASEL pathway during encephalomyocarditis virus (EMCV) and HIV-1 infections. This chain is ATP-binding cassette sub-family E member 1 (ABCE1), found in Homo sapiens (Human).